A 319-amino-acid chain; its full sequence is MNATTSAAAYGLLAGADLEAELAQARVADGDARDAAVLERDGSASVVPLARRRPGSPVSDDAVTLSGVSKRFGARTVLDNVELGIARGSFVAIVGRSGCGKSTLLRLVAGLEQPSSGALETRGEGGGELDTRIMYQDARLLPWKTVLQNVMLGLGRGARDQARAVLDEVGLLERANDWPAQLSGGQRQRVALARALVHRPQLLLLDEPLGALDALTRIEMHALIERLWREHRFTALLVTHDVQEAVALGDRILLIEQGRVALDQPVPLDRPRARASAAFAALEDRVLKRVLAGGPGVSDHGAPHEADNVRPVGQIRWAV.

The 220-residue stretch at valine 63–leucine 282 folds into the ABC transporter domain. Glycine 95–serine 102 contacts ATP.

This sequence belongs to the ABC transporter superfamily. Aliphatic sulfonates importer (TC 3.A.1.17.2) family. As to quaternary structure, the complex is composed of two ATP-binding proteins (SsuB), two transmembrane proteins (SsuC) and a solute-binding protein (SsuA).

The protein resides in the cell inner membrane. The catalysed reaction is ATP + H2O + aliphatic sulfonate-[sulfonate-binding protein]Side 1 = ADP + phosphate + aliphatic sulfonateSide 2 + [sulfonate-binding protein]Side 1.. Its function is as follows. Part of the ABC transporter complex SsuABC involved in aliphatic sulfonates import. Responsible for energy coupling to the transport system. This is Aliphatic sulfonates import ATP-binding protein SsuB 1 from Burkholderia lata (strain ATCC 17760 / DSM 23089 / LMG 22485 / NCIMB 9086 / R18194 / 383).